Reading from the N-terminus, the 356-residue chain is Chorismate synthase (356 aa).

An NADP(+)-binding site is contributed by R46. Residues 122–124 (RSS), 234–235 (NG), G274, 289–293 (KPTPS), and R315 contribute to the FMN site.

This sequence belongs to the chorismate synthase family. As to quaternary structure, homotetramer. Requires FMNH2 as cofactor.

It catalyses the reaction 5-O-(1-carboxyvinyl)-3-phosphoshikimate = chorismate + phosphate. It functions in the pathway metabolic intermediate biosynthesis; chorismate biosynthesis; chorismate from D-erythrose 4-phosphate and phosphoenolpyruvate: step 7/7. Catalyzes the anti-1,4-elimination of the C-3 phosphate and the C-6 proR hydrogen from 5-enolpyruvylshikimate-3-phosphate (EPSP) to yield chorismate, which is the branch point compound that serves as the starting substrate for the three terminal pathways of aromatic amino acid biosynthesis. This reaction introduces a second double bond into the aromatic ring system. The polypeptide is Chorismate synthase (Campylobacter fetus subsp. fetus (strain 82-40)).